Reading from the N-terminus, the 113-residue chain is MSDLEVQVPTAFDPFADANAEDSGAGTKEYVHIRVQQRNGRKSLTTVQGLKKEYSYSKILKDLKKEFCCNGTVVQDSELGQVIQLQGDQRKNVSTFLVQAGLVKKDNIKIHGF.

Position 2 is an N-acetylserine (Ser2).

It belongs to the SUI1 family.

Probably involved in translation. The sequence is that of Protein translation factor SUI1 homolog 2 from Arabidopsis thaliana (Mouse-ear cress).